The following is a 248-amino-acid chain: 3-oxoacyl-[acyl-carrier-protein] reductase FabG (248 aa).

Residues Gly-14–Arg-17, Asp-65–Val-66, and Asn-92 contribute to the NADP(+) site. Residue Ser-144 coordinates substrate. Tyr-157 serves as the catalytic Proton acceptor. NADP(+) contacts are provided by residues Tyr-157–Lys-161 and Ile-190.

The protein belongs to the short-chain dehydrogenases/reductases (SDR) family. As to quaternary structure, homotetramer.

The catalysed reaction is a (3R)-hydroxyacyl-[ACP] + NADP(+) = a 3-oxoacyl-[ACP] + NADPH + H(+). The protein operates within lipid metabolism; fatty acid biosynthesis. Its function is as follows. Catalyzes the NADPH-dependent reduction of beta-ketoacyl-ACP substrates to beta-hydroxyacyl-ACP products, the first reductive step in the elongation cycle of fatty acid biosynthesis. This chain is 3-oxoacyl-[acyl-carrier-protein] reductase FabG (fabG), found in Chlamydia muridarum (strain MoPn / Nigg).